Reading from the N-terminus, the 256-residue chain is MSLKPFTYPFPETRFLHAGPNVYKFKIRYGNSIRGEEIEDKEVIVQELEDSIRAVLANMDSLQPFVTEHFIVFPYKSKWERVSHLKFKHGESILTPYPFVFTLYIEMKWFAEDLPSGKPADDIPLELVLAETEAEEATMRKWKRKLMEEPSSPSRQGPHRAKMETSSEASSNKKPLKESKRSTDEEAQQEYQDTPASNAIAVKEQDAALGHGLQGLVVPPLQHSSPPPPKEPGARGFLGFLSALFPFRYFFKKSGQ.

Topologically, residues 1 to 232 are nuclear; that stretch reads MSLKPFTYPF…HSSPPPPKEP (232 aa). Disordered stretches follow at residues 143 to 197 and 211 to 235; these read KRKL…TPAS and HGLQGLVVPPLQHSSPPPPKEPGAR. Polar residues predominate over residues 164 to 173; that stretch reads ETSSEASSNK. A compositionally biased stretch (basic and acidic residues) spans 175 to 184; sequence PLKESKRSTD. The chain crosses the membrane as a helical span at residues 233–251; the sequence is GARGFLGFLSALFPFRYFF. At 252-256 the chain is on the perinuclear space side; the sequence is KKSGQ.

This sequence belongs to the MAJIN family. As to quaternary structure, component of the MAJIN-TERB1-TERB2 complex, composed of MAJIN, TERB1 and TERB2. In terms of tissue distribution, specifically expressed in germline tissues.

It is found in the nucleus inner membrane. It localises to the chromosome. The protein resides in the telomere. Functionally, meiosis-specific telomere-associated protein involved in meiotic telomere attachment to the nucleus inner membrane, a crucial step for homologous pairing and synapsis. Component of the MAJIN-TERB1-TERB2 complex, which promotes telomere cap exchange by mediating attachment of telomeric DNA to the inner nuclear membrane and replacement of the protective cap of telomeric chromosomes: in early meiosis, the MAJIN-TERB1-TERB2 complex associates with telomeric DNA and the shelterin/telosome complex. During prophase, the complex matures and promotes release of the shelterin/telosome complex from telomeric DNA. In the complex, MAJIN acts as the anchoring subunit to the nucleus inner membrane. MAJIN shows DNA-binding activity, possibly for the stabilization of telomere attachment on the nucleus inner membrane. This is Membrane-anchored junction protein from Mus musculus (Mouse).